The following is a 274-amino-acid chain: MNQYAVWGNPIAQSKSPRIHQLFGEQTGKSISYVAKLGNELNFENELMQFFAEGAKGANITAPFKERAFSLADEYSESCLLAEACNTLKRLDDGRLYADNTDGFGLCSDLERLGWLKPHQRVLILGAGGATKGVLFPLLKAKQQITIYNRTLEKAVRLAEKFAKYGKIRTASLEQIAEQQFDLIINATSLGLQGKYVPVAAHLLKSAAVYDMQYAPDMQTPFLNYARECGAVRYQDGLGMLVGQAGFAFKLWENEFPNVEKVLKQLKNEMENAK.

Shikimate is bound by residues 14–16 and threonine 61; that span reads SKS. Catalysis depends on lysine 65, which acts as the Proton acceptor. Glutamate 77 contacts NADP(+). Residues asparagine 86 and aspartate 102 each contribute to the shikimate site. Residues 126 to 130, 149 to 154, and methionine 212 each bind NADP(+); these read GAGGA and NRTLEK. Shikimate is bound at residue tyrosine 214. Glycine 237 contacts NADP(+).

Belongs to the shikimate dehydrogenase family. In terms of assembly, homodimer.

The catalysed reaction is shikimate + NADP(+) = 3-dehydroshikimate + NADPH + H(+). It functions in the pathway metabolic intermediate biosynthesis; chorismate biosynthesis; chorismate from D-erythrose 4-phosphate and phosphoenolpyruvate: step 4/7. Its function is as follows. Involved in the biosynthesis of the chorismate, which leads to the biosynthesis of aromatic amino acids. Catalyzes the reversible NADPH linked reduction of 3-dehydroshikimate (DHSA) to yield shikimate (SA). This Actinobacillus pleuropneumoniae serotype 5b (strain L20) protein is Shikimate dehydrogenase (NADP(+)).